The sequence spans 588 residues: Aspartate--tRNA ligase (588 aa).

Residue glutamate 174 coordinates L-aspartate. The interval 198-201 is aspartate; sequence QLFK. Arginine 220 contacts L-aspartate. ATP contacts are provided by residues 220–222 and glutamine 229; that span reads RDE. Residue histidine 448 coordinates L-aspartate. Residue glutamate 482 participates in ATP binding. Arginine 489 is a binding site for L-aspartate. 534–537 is a binding site for ATP; the sequence is GIDR.

The protein belongs to the class-II aminoacyl-tRNA synthetase family. Type 1 subfamily. As to quaternary structure, homodimer.

The protein localises to the cytoplasm. It carries out the reaction tRNA(Asp) + L-aspartate + ATP = L-aspartyl-tRNA(Asp) + AMP + diphosphate. In terms of biological role, catalyzes the attachment of L-aspartate to tRNA(Asp) in a two-step reaction: L-aspartate is first activated by ATP to form Asp-AMP and then transferred to the acceptor end of tRNA(Asp). The chain is Aspartate--tRNA ligase from Xanthomonas euvesicatoria pv. vesicatoria (strain 85-10) (Xanthomonas campestris pv. vesicatoria).